A 136-amino-acid chain; its full sequence is uncharacterized protein (136 aa).

Positions 1 to 19 are cleaved as a signal peptide; the sequence is MKKLLMVILGIALIGMAYA.

This is an uncharacterized protein from Methanocaldococcus jannaschii (strain ATCC 43067 / DSM 2661 / JAL-1 / JCM 10045 / NBRC 100440) (Methanococcus jannaschii).